The following is a 455-amino-acid chain: 3-phosphoshikimate 1-carboxyvinyltransferase (455 aa).

The tract at residues 1–23 (MSHGSNPRPATARKSSDLKGTLR) is disordered. Positions 28, 29, and 33 each coordinate 3-phosphoshikimate. Position 28 (lysine 28) interacts with phosphoenolpyruvate. Residues glycine 100 and arginine 128 each contribute to the phosphoenolpyruvate site. 3-phosphoshikimate-binding residues include serine 173, glutamine 175, aspartate 326, and lysine 353. A phosphoenolpyruvate-binding site is contributed by glutamine 175. Aspartate 326 acts as the Proton acceptor in catalysis. 2 residues coordinate phosphoenolpyruvate: arginine 357 and arginine 405.

It belongs to the EPSP synthase family. In terms of assembly, monomer.

It is found in the cytoplasm. It carries out the reaction 3-phosphoshikimate + phosphoenolpyruvate = 5-O-(1-carboxyvinyl)-3-phosphoshikimate + phosphate. Its pathway is metabolic intermediate biosynthesis; chorismate biosynthesis; chorismate from D-erythrose 4-phosphate and phosphoenolpyruvate: step 6/7. Functionally, catalyzes the transfer of the enolpyruvyl moiety of phosphoenolpyruvate (PEP) to the 5-hydroxyl of shikimate-3-phosphate (S3P) to produce enolpyruvyl shikimate-3-phosphate and inorganic phosphate. The chain is 3-phosphoshikimate 1-carboxyvinyltransferase from Rhizobium meliloti (strain 1021) (Ensifer meliloti).